The sequence spans 298 residues: Protoheme IX farnesyltransferase (298 aa).

9 helical membrane passes run 26–46 (VVSL…PGAV), 52–72 (IFGT…NCLV), 93–113 (VSVP…LFML), 120–140 (LTMW…TVIL), 148–168 (IVIG…AVTG), 174–194 (ALLL…ALAL), 219–239 (LHVL…YLTQ), 241–261 (SGLI…YYAI), and 278–298 (YSIA…YFYF).

It belongs to the UbiA prenyltransferase family. Protoheme IX farnesyltransferase subfamily.

It is found in the cell inner membrane. It catalyses the reaction heme b + (2E,6E)-farnesyl diphosphate + H2O = Fe(II)-heme o + diphosphate. The protein operates within porphyrin-containing compound metabolism; heme O biosynthesis; heme O from protoheme: step 1/1. Functionally, converts heme B (protoheme IX) to heme O by substitution of the vinyl group on carbon 2 of heme B porphyrin ring with a hydroxyethyl farnesyl side group. The polypeptide is Protoheme IX farnesyltransferase (Nitrosomonas europaea (strain ATCC 19718 / CIP 103999 / KCTC 2705 / NBRC 14298)).